The following is a 146-amino-acid chain: Ribosome maturation factor RimP (146 aa).

Belongs to the RimP family.

It is found in the cytoplasm. Required for maturation of 30S ribosomal subunits. This Dechloromonas aromatica (strain RCB) protein is Ribosome maturation factor RimP.